We begin with the raw amino-acid sequence, 421 residues long: Trimethyllysine dioxygenase, mitochondrial (421 aa).

Residues 1 to 15 constitute a mitochondrion transit peptide; the sequence is MWYHKLLHQQSRLRN. Lys179 and Lys236 each carry N6-acetyllysine. The Fe cation site is built by His242, Asp244, and His389.

Belongs to the gamma-BBH/TMLD family. In terms of assembly, homodimer. Fe(2+) is required as a cofactor. Requires L-ascorbate as cofactor.

Its subcellular location is the mitochondrion matrix. It carries out the reaction N(6),N(6),N(6)-trimethyl-L-lysine + 2-oxoglutarate + O2 = (3S)-3-hydroxy-N(6),N(6),N(6)-trimethyl-L-lysine + succinate + CO2. The protein operates within amine and polyamine biosynthesis; carnitine biosynthesis. In terms of biological role, converts trimethyllysine (TML) into hydroxytrimethyllysine (HTML). The polypeptide is Trimethyllysine dioxygenase, mitochondrial (Tmlhe) (Mus musculus (Mouse)).